Consider the following 305-residue polypeptide: Ornithine carbamoyltransferase, catabolic (305 aa).

Residues 50–53 (STRT), Q77, R101, and 128–131 (HPLQ) contribute to the carbamoyl phosphate site. L-ornithine-binding positions include N159, D223, and 227-228 (SM). Residues 263–264 (CL) and R291 contribute to the carbamoyl phosphate site.

Belongs to the aspartate/ornithine carbamoyltransferase superfamily. OTCase family.

It localises to the cytoplasm. It carries out the reaction carbamoyl phosphate + L-ornithine = L-citrulline + phosphate + H(+). It functions in the pathway amino-acid degradation; L-arginine degradation via ADI pathway; carbamoyl phosphate from L-arginine: step 2/2. Its function is as follows. Reversibly catalyzes the transfer of the carbamoyl group from carbamoyl phosphate (CP) to the N(epsilon) atom of ornithine (ORN) to produce L-citrulline. This chain is Ornithine carbamoyltransferase, catabolic, found in Thermoplasma volcanium (strain ATCC 51530 / DSM 4299 / JCM 9571 / NBRC 15438 / GSS1).